Consider the following 100-residue polypeptide: MDNTNRLRHLRSRKQSKFTLGDTAEVNSVKWEFINMTEQEEDLIFRMHRLVGDRWDLIAGRVVGREAKDIERYWIMRNCDHCSHKRRRVHKFYRFSISPP.

The 38-residue stretch at 37–74 folds into the Myb-like domain; it reads TEQEEDLIFRMHRLVGDRWDLIAGRVVGREAKDIERYW.

As to quaternary structure, interacts with GL3. As to expression, expressed in cotyledons, petioles, rosette leaves, hydathodes, cauline leaves, stems, pedicels and flower buds.

The protein localises to the nucleus. Its function is as follows. MYB-type transcription factor involved in trichome cell specification. Acts as a negative regulator of trichome patterning and formation. May function by suppressing the expression of GL3. This Arabidopsis thaliana (Mouse-ear cress) protein is MYB-like transcription factor TCL2 (TCL2).